The chain runs to 325 residues: DNA-directed RNA polymerase subunit alpha (325 aa).

The tract at residues 1 to 231 (MQTSLLKPKI…DQLSVFAALE (231 aa)) is alpha N-terminal domain (alpha-NTD). The interval 246–325 (IDPILLRPVD…ENWPPAGLDK (80 aa)) is alpha C-terminal domain (alpha-CTD).

Belongs to the RNA polymerase alpha chain family. In terms of assembly, homodimer. The RNAP catalytic core consists of 2 alpha, 1 beta, 1 beta' and 1 omega subunit. When a sigma factor is associated with the core the holoenzyme is formed, which can initiate transcription.

The catalysed reaction is RNA(n) + a ribonucleoside 5'-triphosphate = RNA(n+1) + diphosphate. DNA-dependent RNA polymerase catalyzes the transcription of DNA into RNA using the four ribonucleoside triphosphates as substrates. This is DNA-directed RNA polymerase subunit alpha from Burkholderia multivorans (strain ATCC 17616 / 249).